The sequence spans 187 residues: MAERENRRDRRDDRSREETPEFADRLVAINRVSKTVKGGKRFGFAALVVVGDQRGRVGFGKGKAKEVPEAIRKATEQAKRQMIRVALRDGRTLHHDQEGRHGAGKVVMRAAVPGTGIIAGGPMRAVFEMLGIQDVVAKSLGSQNPYNMIRATMDGLKRESSPRQVAQRRGKKVADILKKPEAEVAEA.

The segment at 1-20 (MAERENRRDRRDDRSREETP) is disordered. In terms of domain architecture, S5 DRBM spans 22–85 (FADRLVAINR…EQAKRQMIRV (64 aa)).

Belongs to the universal ribosomal protein uS5 family. As to quaternary structure, part of the 30S ribosomal subunit. Contacts proteins S4 and S8.

Functionally, with S4 and S12 plays an important role in translational accuracy. Located at the back of the 30S subunit body where it stabilizes the conformation of the head with respect to the body. In Cereibacter sphaeroides (strain ATCC 17029 / ATH 2.4.9) (Rhodobacter sphaeroides), this protein is Small ribosomal subunit protein uS5.